The following is an 83-amino-acid chain: U2-hexatoxin-Hi1a (83 aa).

The first 23 residues, 1–23 (MRNTTFLVLNVMLLVSVALFCAA), serve as a signal peptide directing secretion. The propeptide occupies 24 to 45 (DPEMEKSSFAEILDTGNPEQER). 4 disulfide bridges follow: Cys-47–Cys-63, Cys-54–Cys-68, Cys-62–Cys-78, and Cys-70–Cys-76.

Belongs to the neurotoxin 07 (Beta/delta-agtx) family. In terms of tissue distribution, expressed by the venom gland.

It localises to the secreted. Inhibits sodium channels (Nav) of insects. The protein is U2-hexatoxin-Hi1a of Hadronyche infensa (Fraser island funnel-web spider).